A 141-amino-acid polypeptide reads, in one-letter code: Large ribosomal subunit protein uL11 (141 aa).

This sequence belongs to the universal ribosomal protein uL11 family. As to quaternary structure, part of the ribosomal stalk of the 50S ribosomal subunit. Interacts with L10 and the large rRNA to form the base of the stalk. L10 forms an elongated spine to which L12 dimers bind in a sequential fashion forming a multimeric L10(L12)X complex. Post-translationally, one or more lysine residues are methylated.

Functionally, forms part of the ribosomal stalk which helps the ribosome interact with GTP-bound translation factors. The protein is Large ribosomal subunit protein uL11 of Chlamydia pneumoniae (Chlamydophila pneumoniae).